The sequence spans 238 residues: MRPAGRSANQVRPVTLTRNYTKHAEGSVLVEFGDTKVLCTASIEEGVPRFLKGQGQGWITAEYGMLPRATHTRNAREAAKGKQGGRTMEIQRLIARALRAAVDLKTLGEFTITLDCDVIQADGGTRTASISGACVALADALNKLVANGKLKTNPMKGMVAAVSVGIVNGEALCDLEYVEDSAAETDMNVVMTEDGRIIEVQGTAEGEPFSHEELLTLLALARGGIESIVATQKAALEN.

Residues Arg86 and 124 to 126 (GTR) contribute to the phosphate site.

This sequence belongs to the RNase PH family. As to quaternary structure, homohexameric ring arranged as a trimer of dimers.

The enzyme catalyses tRNA(n+1) + phosphate = tRNA(n) + a ribonucleoside 5'-diphosphate. Its function is as follows. Phosphorolytic 3'-5' exoribonuclease that plays an important role in tRNA 3'-end maturation. Removes nucleotide residues following the 3'-CCA terminus of tRNAs; can also add nucleotides to the ends of RNA molecules by using nucleoside diphosphates as substrates, but this may not be physiologically important. Probably plays a role in initiation of 16S rRNA degradation (leading to ribosome degradation) during starvation. This chain is Ribonuclease PH, found in Citrobacter koseri (strain ATCC BAA-895 / CDC 4225-83 / SGSC4696).